A 474-amino-acid polypeptide reads, in one-letter code: MQLSSYQDLRSELISRRITCEKVVLDYLERIDRHRDDNIYITVFHEQAVEKARKLDKKLSEGGLPGKLFGMPMAIKDNISIKGAGLTCASRILENYESVYDATAVQRLEAEDAVFLGKTNMDEFAMGSSNENSAFGAVPNPFDKTRVPGGSSGGSAAAVAAGLALAALGSDTGGSVRQPAGFCDIVGLKPTYGRISRYGLVAFASSFDQIGVLARNCDDASLVLGIMAGKDEHDATSSHRDVPDYAADMAAVRVEGLKIGVPKEYFHESLNREVGEIVRAKLHELRDKGAELVDITLPESDYAIAAYYILVTAEASSNLARFDGARYGYRSSRAEDVLAMYVNSRTEGFGKEVKRRIMLGTYVLSAGYYDTYYKKAQQVRRVFQDRYREALEKVDVIAGPTSPFPPFSIGEKMDDPLEMYLADVFTVPASIVGMPAVSVPVGMDSRNLPVGMHLICDFFEEGKLMGIARHLQRR.

Catalysis depends on charge relay system residues Lys76 and Ser151. Ser175 serves as the catalytic Acyl-ester intermediate.

The protein belongs to the amidase family. GatA subfamily. As to quaternary structure, heterotrimer of A, B and C subunits.

The enzyme catalyses L-glutamyl-tRNA(Gln) + L-glutamine + ATP + H2O = L-glutaminyl-tRNA(Gln) + L-glutamate + ADP + phosphate + H(+). In terms of biological role, allows the formation of correctly charged Gln-tRNA(Gln) through the transamidation of misacylated Glu-tRNA(Gln) in organisms which lack glutaminyl-tRNA synthetase. The reaction takes place in the presence of glutamine and ATP through an activated gamma-phospho-Glu-tRNA(Gln). In Chlorobium limicola (strain DSM 245 / NBRC 103803 / 6330), this protein is Glutamyl-tRNA(Gln) amidotransferase subunit A.